The chain runs to 166 residues: NAD(P)H-quinone oxidoreductase subunit I, chloroplastic (166 aa).

2 consecutive 4Fe-4S ferredoxin-type domains span residues 55 to 84 (GRIH…VDWK) and 95 to 124 (LNYS…MTEE). [4Fe-4S] cluster contacts are provided by cysteine 64, cysteine 67, cysteine 70, cysteine 74, cysteine 104, cysteine 107, cysteine 110, and cysteine 114.

It belongs to the complex I 23 kDa subunit family. In terms of assembly, NDH is composed of at least 16 different subunits, 5 of which are encoded in the nucleus. [4Fe-4S] cluster serves as cofactor.

It is found in the plastid. Its subcellular location is the chloroplast thylakoid membrane. It carries out the reaction a plastoquinone + NADH + (n+1) H(+)(in) = a plastoquinol + NAD(+) + n H(+)(out). The catalysed reaction is a plastoquinone + NADPH + (n+1) H(+)(in) = a plastoquinol + NADP(+) + n H(+)(out). Functionally, NDH shuttles electrons from NAD(P)H:plastoquinone, via FMN and iron-sulfur (Fe-S) centers, to quinones in the photosynthetic chain and possibly in a chloroplast respiratory chain. The immediate electron acceptor for the enzyme in this species is believed to be plastoquinone. Couples the redox reaction to proton translocation, and thus conserves the redox energy in a proton gradient. This chain is NAD(P)H-quinone oxidoreductase subunit I, chloroplastic, found in Aphanactis jamesoniana.